Reading from the N-terminus, the 111-residue chain is MTAAQFTNVTVNAQATISYDGRCSSHTIMFEDGRHKTLGVILPCDNLVEHYHFSTNTSERIEITSGECEVKINGEEEFSYYRAGQSFVVEGNSGFNLRTEQIVQYICHLEG.

The protein belongs to the nucleoside phosphorylase PpnP family.

The catalysed reaction is a purine D-ribonucleoside + phosphate = a purine nucleobase + alpha-D-ribose 1-phosphate. It carries out the reaction adenosine + phosphate = alpha-D-ribose 1-phosphate + adenine. It catalyses the reaction cytidine + phosphate = cytosine + alpha-D-ribose 1-phosphate. The enzyme catalyses guanosine + phosphate = alpha-D-ribose 1-phosphate + guanine. The catalysed reaction is inosine + phosphate = alpha-D-ribose 1-phosphate + hypoxanthine. It carries out the reaction thymidine + phosphate = 2-deoxy-alpha-D-ribose 1-phosphate + thymine. It catalyses the reaction uridine + phosphate = alpha-D-ribose 1-phosphate + uracil. The enzyme catalyses xanthosine + phosphate = alpha-D-ribose 1-phosphate + xanthine. Catalyzes the phosphorolysis of diverse nucleosides, yielding D-ribose 1-phosphate and the respective free bases. Can use uridine, adenosine, guanosine, cytidine, thymidine, inosine and xanthosine as substrates. Also catalyzes the reverse reactions. This Psychrobacter cryohalolentis (strain ATCC BAA-1226 / DSM 17306 / VKM B-2378 / K5) protein is Pyrimidine/purine nucleoside phosphorylase 1.